Here is a 1071-residue protein sequence, read N- to C-terminus: MKLIYTEMSYSMTEILVNEARKAADQGYRVFYIAPNSLSFEKEREVLTLLPERGTFSIIVTRFVQMSRYFTVESSPSKQHLDDTTLAMIFYRALMQLKPEDLPSYGRLQNNSVFIEQLVELYKELKNAQLSVHDLTGLDHPQKQEDLIKIIELAETIMIQQDYNQDSPLQSFARAIKLGLLNNQLSKTVIVIDGFSRFSAEEDYLLSLLNNNCQEVIIGSYVSQKAYQKSFIKGNIYEASLHFLQDLAQKYHIKPVFATSNQVFKPAFSRLTQLFEATHDFSQVDWQLQKNDLDHFSLWQCHHQKEEIEHVAKSIRQKLYEGYRYKDILVLLGDMDAYQLQIGPIFDKFEIPYYLGKAEPMAAHPLVQFIESLERSQRYNWRREDILNMLKSGLFGCFDDSDIDRFEEYTQFADIKGFTKFSKPFTINSSRQYPLDFLNEMRQDIVLPLQELFKSQKQLGASLIDKLILFLEKIRLAENMQGLAQSQLEVEKNEEVWKRFTDILTSFHHIFGQEKLRLSDCLALIKTGMKSAQYRVVPATLDVVTIKSYDLVQPHSKPFVYAIGLTQSHFPKQIHHSGLLSDQERARINEIRNYRHFDIASAENSKKNHQTALSLFNAATKELVLSVPTVINETFDDLSPYLKELINFGLPLLDKGKNYLSYDNSDIGNYKALLSQIIAINRQDLIEMSDQDKMFWTVVLRYLRKQLRKQQLELPTSDYRLSTKPLSKEVIEVCFPKGIPLKLSATALTVFYNNQYNYFLKYVLNLNKTESIHPDSRIHGQYLHRVFERLMKDHTQEPFDNKLKQAIYHTNQESFFQQVYQDNAEAEYSLAILEDIVRSTAPILQLNQNIKVIDQEKNFHLDMGNEILVHGIIDRIDQLSDGSLGIVDYKSSANQFDIGTFYNGLSPQLVTYLAALKQIAPHDINQLFGAMYLHLQDPKLDLVTFKQIDNTLVESIYKALTYKGIFSEVEKEHLSTGAYQTKNALYSNDELETLLNYNKYLYLKAAKHIKKGHFLINPYTSDGKTVQGDQLKAITRFEADLDMAQARRLVTLPAKEKKECFLTLMRKESHL.

The protein belongs to the helicase family. AddB/RexB type 2 subfamily. Heterodimer of AddA and RexB. Requires Mg(2+) as cofactor.

Functionally, the heterodimer acts as both an ATP-dependent DNA helicase and an ATP-dependent, dual-direction single-stranded exonuclease. Recognizes the chi site generating a DNA molecule suitable for the initiation of homologous recombination. This subunit has 5' -&gt; 3' nuclease activity but not helicase activity. This chain is ATP-dependent helicase/deoxyribonuclease subunit B, found in Streptococcus pyogenes serotype M12 (strain MGAS2096).